The chain runs to 347 residues: Chlorophyll a/b light-harvesting protein PcbB (347 aa).

6 helical membrane-spanning segments follow: residues glycine 25–isoleucine 45, leucine 64–valine 84, alanine 91–valine 111, leucine 206–threonine 226, leucine 247–valine 267, and leucine 308–isoleucine 328.

It belongs to the PsbB/PsbC family. IsiA/Pcb subfamily. The antenna complex consists of chlorophylls (a and b) and chlorophyll a/b binding proteins. It depends on chlorophyll a as a cofactor. Chlorophyll b serves as cofactor.

The protein resides in the cellular thylakoid membrane. Its function is as follows. The antenna complex functions as a light receptor, it captures and delivers excitation energy to photosystems II and I. The Prochlorales pcb genes are not related to higher plant LHCs. This chain is Chlorophyll a/b light-harvesting protein PcbB (pcbB), found in Prochlorothrix hollandica.